The chain runs to 122 residues: MARIAGVNIPTNKRVVIALTYIHGIGNTKAKEICGTVGIPAERRVNELTDAEVIQIREAIDRDYLVEGDLRREVSMNIKRLMDLGCYRGLRHRKGLPVRGQRTHTNARTRKGPAKAIAGKKK.

Positions 99–122 are disordered; sequence RGQRTHTNARTRKGPAKAIAGKKK.

Belongs to the universal ribosomal protein uS13 family. Part of the 30S ribosomal subunit. Forms a loose heterodimer with protein S19. Forms two bridges to the 50S subunit in the 70S ribosome.

In terms of biological role, located at the top of the head of the 30S subunit, it contacts several helices of the 16S rRNA. In the 70S ribosome it contacts the 23S rRNA (bridge B1a) and protein L5 of the 50S subunit (bridge B1b), connecting the 2 subunits; these bridges are implicated in subunit movement. Contacts the tRNAs in the A and P-sites. The chain is Small ribosomal subunit protein uS13 from Parvibaculum lavamentivorans (strain DS-1 / DSM 13023 / NCIMB 13966).